Consider the following 1585-residue polypeptide: uncharacterized protein (1585 aa).

The stretch at aspartate 12–threonine 59 forms a coiled coil. 2 disordered regions span residues proline 586–arginine 627 and isoleucine 645–arginine 692. The span at threonine 618–arginine 627 shows a compositional bias: polar residues. Basic residues predominate over residues isoleucine 645–glycine 655. Over residues asparagine 661 to valine 672 the composition is skewed to polar residues. A phosphoserine mark is found at serine 970 and serine 972.

It to B.subtilis XkdO.

This is an uncharacterized protein from Bacillus subtilis (strain 168).